Here is a 1372-residue protein sequence, read N- to C-terminus: DNA-directed RNA polymerase subunit beta' (1372 aa).

Zn(2+) contacts are provided by cysteine 69, cysteine 71, cysteine 84, and cysteine 87. Mg(2+) is bound by residues aspartate 460, aspartate 462, and aspartate 464. Residues cysteine 808, cysteine 882, cysteine 889, and cysteine 892 each contribute to the Zn(2+) site.

It belongs to the RNA polymerase beta' chain family. In terms of assembly, the RNAP catalytic core consists of 2 alpha, 1 beta, 1 beta' and 1 omega subunit. When a sigma factor is associated with the core the holoenzyme is formed, which can initiate transcription. The cofactor is Mg(2+). Requires Zn(2+) as cofactor.

It carries out the reaction RNA(n) + a ribonucleoside 5'-triphosphate = RNA(n+1) + diphosphate. Its function is as follows. DNA-dependent RNA polymerase catalyzes the transcription of DNA into RNA using the four ribonucleoside triphosphates as substrates. The protein is DNA-directed RNA polymerase subunit beta' of Rickettsia akari (strain Hartford).